The following is a 164-amino-acid chain: MNRISIYRIKVLAFLFAVSTYVYPASSLELNEEARTVKLNSEGQSLTLNEEQIKKGKRLFNSHCGSCHVGGITKTNPNVGLDLESLNGANPPRNNINALVEYMKDPKTYDGSESIAEIHPSIKSADIFPKMRDLSDDDLKVIAGHILVQPKINSEKWGGGKIYY.

The N-terminal stretch at 1-27 (MNRISIYRIKVLAFLFAVSTYVYPASS) is a signal peptide. The heme c site is built by C64, C67, H68, and H119.

It belongs to the cytochrome c family. PsbV subfamily. In terms of assembly, PSII is composed of 1 copy each of membrane proteins PsbA, PsbB, PsbC, PsbD, PsbE, PsbF, PsbH, PsbI, PsbJ, PsbK, PsbL, PsbM, PsbT, PsbY, PsbZ, Psb30/Ycf12, at least 3 peripheral proteins of the oxygen-evolving complex and a large number of cofactors. It forms dimeric complexes. The extrinsic subunits in red algae are PsbO (OEC33), PsbQ', cytochrome c-550 and PsbU. Heme c serves as cofactor.

The protein localises to the plastid. It localises to the chloroplast thylakoid membrane. In terms of biological role, one of the extrinsic, lumenal subunits of photosystem II (PSII). PSII is a light-driven water plastoquinone oxidoreductase, using light energy to abstract electrons from H(2)O, generating a proton gradient subsequently used for ATP formation. The extrinsic proteins stabilize the structure of photosystem II oxygen-evolving complex (OEC), the ion environment of oxygen evolution and protect the OEC against heat-induced inactivation. The polypeptide is Photosystem II extrinsic protein V (Cyanidium caldarium (Red alga)).